We begin with the raw amino-acid sequence, 296 residues long: 4-hydroxybenzoate octaprenyltransferase (296 aa).

Transmembrane regions (helical) follow at residues 28–48 (PIGI…AGKG), 52–72 (LANI…GCVI), 102–122 (ALVF…CTNA), 146–166 (YYPQ…AFTA), 169–189 (GELP…TVGY), 219–239 (VIIL…GSKF), 241–261 (LGMW…WEFW), and 275–295 (FLHN…DYAL).

Belongs to the UbiA prenyltransferase family. The cofactor is Mg(2+).

Its subcellular location is the cell inner membrane. The enzyme catalyses all-trans-octaprenyl diphosphate + 4-hydroxybenzoate = 4-hydroxy-3-(all-trans-octaprenyl)benzoate + diphosphate. It participates in cofactor biosynthesis; ubiquinone biosynthesis. Catalyzes the prenylation of para-hydroxybenzoate (PHB) with an all-trans polyprenyl group. Mediates the second step in the final reaction sequence of ubiquinone-8 (UQ-8) biosynthesis, which is the condensation of the polyisoprenoid side chain with PHB, generating the first membrane-bound Q intermediate 3-octaprenyl-4-hydroxybenzoate. The polypeptide is 4-hydroxybenzoate octaprenyltransferase (Pseudomonas fluorescens (strain Pf0-1)).